Reading from the N-terminus, the 432-residue chain is Adenylosuccinate synthetase (432 aa).

Residues 12 to 18 and 40 to 42 each bind GTP; these read GDEGKGK and GHT. The active-site Proton acceptor is Asp-13. Positions 13 and 40 each coordinate Mg(2+). IMP is bound by residues 13 to 16, 38 to 41, Thr-128, Arg-142, Gln-223, Thr-238, and Arg-302; these read DEGK and NAGH. The active-site Proton donor is His-41. 298–304 is a binding site for substrate; sequence TVTGRPR. GTP-binding positions include Arg-304, 330 to 332, and 412 to 414; these read LLD and SVG.

This sequence belongs to the adenylosuccinate synthetase family. Homodimer. Mg(2+) serves as cofactor.

Its subcellular location is the cytoplasm. It carries out the reaction IMP + L-aspartate + GTP = N(6)-(1,2-dicarboxyethyl)-AMP + GDP + phosphate + 2 H(+). It functions in the pathway purine metabolism; AMP biosynthesis via de novo pathway; AMP from IMP: step 1/2. Its function is as follows. Plays an important role in the de novo pathway of purine nucleotide biosynthesis. Catalyzes the first committed step in the biosynthesis of AMP from IMP. The polypeptide is Adenylosuccinate synthetase (Limosilactobacillus reuteri (strain DSM 20016) (Lactobacillus reuteri)).